The chain runs to 156 residues: Transcriptional repressor NrdR (156 aa).

The segment at 3–34 (CPFCGSMDTRVLDSRPTLDGTAIRRRRECSSC) is a zinc-finger region. An ATP-cone domain is found at 49–139 (VLVVKKDGRR…VYRDFREVDQ (91 aa)).

The protein belongs to the NrdR family. The cofactor is Zn(2+).

Functionally, negatively regulates transcription of bacterial ribonucleotide reductase nrd genes and operons by binding to NrdR-boxes. The chain is Transcriptional repressor NrdR from Thermotoga maritima (strain ATCC 43589 / DSM 3109 / JCM 10099 / NBRC 100826 / MSB8).